A 47-amino-acid polypeptide reads, in one-letter code: MALINFDLLAELPLAYQAFAPTVDVLPLIPLFFFLLVFVWQAAVGFR.

The propeptide occupies 1–10 (MALINFDLLA). The chain crosses the membrane as a helical span at residues 26-46 (LPLIPLFFFLLVFVWQAAVGF).

Belongs to the PsbK family. PSII is composed of 1 copy each of membrane proteins PsbA, PsbB, PsbC, PsbD, PsbE, PsbF, PsbH, PsbI, PsbJ, PsbK, PsbL, PsbM, PsbT, PsbX, PsbY, Psb30/Ycf12, peripheral proteins PsbO, CyanoQ (PsbQ), PsbU, PsbV and a large number of cofactors. It forms dimeric complexes.

It is found in the cellular thylakoid membrane. In terms of biological role, one of the components of the core complex of photosystem II (PSII). PSII is a light-driven water:plastoquinone oxidoreductase that uses light energy to abstract electrons from H(2)O, generating O(2) and a proton gradient subsequently used for ATP formation. It consists of a core antenna complex that captures photons, and an electron transfer chain that converts photonic excitation into a charge separation. The polypeptide is Photosystem II reaction center protein K (Prochlorococcus marinus (strain NATL2A)).